Here is a 553-residue protein sequence, read N- to C-terminus: Formate--tetrahydrofolate ligase (553 aa).

An ATP-binding site is contributed by 62–69 (TPAGEGKS).

Belongs to the formate--tetrahydrofolate ligase family.

The enzyme catalyses (6S)-5,6,7,8-tetrahydrofolate + formate + ATP = (6R)-10-formyltetrahydrofolate + ADP + phosphate. It functions in the pathway one-carbon metabolism; tetrahydrofolate interconversion. This chain is Formate--tetrahydrofolate ligase, found in Pediococcus pentosaceus (strain ATCC 25745 / CCUG 21536 / LMG 10740 / 183-1w).